We begin with the raw amino-acid sequence, 691 residues long: MARTQAEPPASQPDARAAWLRDQLERANYAYYVLDQPDLPDAEYDRLFRELQQLETDHPELVTPDSPTQRVGGEAAGGFTPVVHDAPMLSLNNGFADEDIAAFDKRVADALDKTTDLAGSVTEPVEYACELKFDGLAISLRYEQGVFVQASTRGDGTTGEDVTENVRTIRSIPLKLKGKHVPAVLDVRGEVLMFKRDFARLNERQRAAEQREFANPRNAAAGSLRQLDSKITAQRPLSFFAYGIGVLDGMPMLDTHSALLDWYESLGLPVNREREVVQGAEGLLGFFRKIGEKRESLPYDIDGVVYKVNRRDEQERLGFVSRAPRFALAHKFPAQEALTKLVAIDVQVGRTGAITPVARLEPVFVGGATVTNATLHNEDEVRRKDIRIGDTVIVRRAGDVIPEVVGALLDRRPADAAEFVMPTECPVCGSKIERLPDEAIARCTGGLFCPAQRKQALWHFAQRRALDIDGLGEKIIDQLVELNLVRTPADLFNLGFATLAELDRFAEKSAQNLLDSLEKAKHTTLARFIYGLGIRHVGESTAKDLAKHFGSLTPIMDASIEELLEVNDVGPIVAESLHQFFAEEHNRTVIEQLRAPGKVTWPEGPPAPKAPQGVLAGKTVVLTGTLPTLTRDAAKEMLEAAGAKVAGSVSKKTDYVVAGAEAGSKLVKAEELGIPVLDEDGLHQLLEGNTP.

NAD(+)-binding positions include 41–45 (DAEYD), 90–91 (SL), and Glu130. Catalysis depends on Lys132, which acts as the N6-AMP-lysine intermediate. Positions 153, 190, 307, and 331 each coordinate NAD(+). Cys425, Cys428, Cys443, and Cys449 together coordinate Zn(2+). The 82-residue stretch at 610 to 691 (APQGVLAGKT…LHQLLEGNTP (82 aa)) folds into the BRCT domain.

Belongs to the NAD-dependent DNA ligase family. LigA subfamily. Mg(2+) serves as cofactor. The cofactor is Mn(2+).

It carries out the reaction NAD(+) + (deoxyribonucleotide)n-3'-hydroxyl + 5'-phospho-(deoxyribonucleotide)m = (deoxyribonucleotide)n+m + AMP + beta-nicotinamide D-nucleotide.. Its function is as follows. DNA ligase that catalyzes the formation of phosphodiester linkages between 5'-phosphoryl and 3'-hydroxyl groups in double-stranded DNA using NAD as a coenzyme and as the energy source for the reaction. It is essential for DNA replication and repair of damaged DNA. The protein is DNA ligase of Burkholderia lata (strain ATCC 17760 / DSM 23089 / LMG 22485 / NCIMB 9086 / R18194 / 383).